Here is a 105-residue protein sequence, read N- to C-terminus: MVRYRMRSPSEGPHQGPGQDHEREEQGQGQELSPERVEDYGRTHRGHHRHRRCSRKRLHRIHKRRRSCRRRRRHSCCHRRRHRRGCRRSRRRRRCKCRKCRRHCH.

The segment at methionine 1–histidine 74 is disordered. Phosphoserine occurs at positions 8, 10, and 33. Over residues serine 33–arginine 42 the composition is skewed to basic and acidic residues. The span at threonine 43–histidine 74 shows a compositional bias: basic residues.

This sequence belongs to the protamine P2 family. In terms of assembly, interacts with TDRP. In terms of processing, proteolytic processing into mature chains is required for histone eviction during spermatogenesis. Transition proteins (TNP1 and TNP2) are required for processing. In terms of tissue distribution, testis.

The protein localises to the nucleus. The protein resides in the chromosome. Its function is as follows. Protamines substitute for histones in the chromatin of sperm during the haploid phase of spermatogenesis. They compact sperm DNA into a highly condensed, stable and inactive complex. In Rattus fuscipes (Bush rat), this protein is Protamine-2 (Prm2).